We begin with the raw amino-acid sequence, 421 residues long: Elongation factor 1-alpha (421 aa).

The 217-residue stretch at 4–220 (NRHQNLAVIG…NGLPVPQPPT (217 aa)) folds into the tr-type G domain. The G1 stretch occupies residues 13–20 (GHVDHGKS). Position 13 to 20 (13 to 20 (GHVDHGKS)) interacts with GTP. Position 20 (S20) interacts with Mg(2+). A G2 region spans residues 69–73 (GVTID). The interval 90 to 93 (DCPG) is G3. GTP is bound by residues 90 to 94 (DCPGH) and 145 to 148 (NKMD). Residues 145-148 (NKMD) form a G4 region. The G5 stretch occupies residues 184-186 (SAF).

It belongs to the TRAFAC class translation factor GTPase superfamily. Classic translation factor GTPase family. EF-Tu/EF-1A subfamily.

Its subcellular location is the cytoplasm. It catalyses the reaction GTP + H2O = GDP + phosphate + H(+). GTP hydrolase that promotes the GTP-dependent binding of aminoacyl-tRNA to the A-site of ribosomes during protein biosynthesis. This Halobacterium salinarum (strain ATCC 700922 / JCM 11081 / NRC-1) (Halobacterium halobium) protein is Elongation factor 1-alpha.